A 793-amino-acid chain; its full sequence is Meiosis-specific protein ASY3 (793 aa).

4 disordered regions span residues 1–40 (MSDYRSFGSNYHPSSQSRKISIGVMADSQPKRNLVPDKDD), 58–97 (LQANKKEKSDLAAKQRNSAQVTGHVTSPWRSPRSSHRKLG), 110–287 (LSGS…KAGA), and 305–586 (EGLR…KRNS). Polar residues predominate over residues 7–19 (FGSNYHPSSQSRK). Over residues 60 to 70 (ANKKEKSDLAA) the composition is skewed to basic and acidic residues. Positions 72 to 86 (QRNSAQVTGHVTSPW) are enriched in polar residues. Positions 110 to 122 (LSGSKGLNKGLNG) are enriched in low complexity. A compositionally biased stretch (polar residues) spans 131–142 (SFQNCPISSPQH). Basic and acidic residues-rich tracts occupy residues 151–165 (RNDRVMDRSPERMEE) and 177–187 (SQREKMDKPGK). Positions 209 to 219 (PANNEDVNSET) are enriched in polar residues. The segment covering 221 to 248 (EVEKTNFKLSQDKGSNDDPLIKPRHNSD) has biased composition (basic and acidic residues). Basic residues predominate over residues 322 to 341 (KKQRGRRKNTVVKCRKAHSR). 4 stretches are compositionally biased toward basic and acidic residues: residues 342–354 (KKDEADWSRKEAS), 363–385 (ESTETGKRSSSSDKKGSSHDLHP), 392–407 (QKPDISTREGDFHPSP), and 424–441 (NGDKHERPSNIFREKSVE). Low complexity-rich tracts occupy residues 455–470 (APISSPSPCCSPEASP) and 491–502 (GTKKTSQGTTGQ). Composition is skewed to basic and acidic residues over residues 505–527 (DTEKRLPDFLEKKRDYSFRRESS) and 541–553 (SDERDSDGSREDS). A coiled-coil region spans residues 682 to 745 (SNLAKTKRKH…KGSIKKQRTS (64 aa)).

Interacts with ASY1.

It is found in the chromosome. Its subcellular location is the nucleus. Required for normal meiosis in male and female gametophytes. Acts with ASY1 at the interface between the developing chromosome axes and the recombination machinery to ensure interhomolog recombination. Required for synaptonemal complex formation during meiosis. The chain is Meiosis-specific protein ASY3 from Arabidopsis thaliana (Mouse-ear cress).